The primary structure comprises 310 residues: Spermatid maturation protein 1 (310 aa).

A helical membrane pass occupies residues 29–49 (ILLLLGLIVCINIGINLVTLL). Residues 215 to 238 (ALSHKNNAAGSGGCVEGEQAQGQP) form a disordered region. Residues 262-286 (VYDARDVRRRLRELTQEVEALSHCY) adopt a coiled-coil conformation.

In terms of tissue distribution, testis-specific. Exclusively present in cytoplasm of steps 14-16 elongated spermatids (at protein level).

The protein localises to the membrane. It is found in the cytoplasm. Functionally, required for proper cytoplasm removal during spermatogenesis. The sequence is that of Spermatid maturation protein 1 (Spem1) from Mus musculus (Mouse).